We begin with the raw amino-acid sequence, 156 residues long: Small ribosomal subunit protein uS7 (156 aa).

The protein belongs to the universal ribosomal protein uS7 family. As to quaternary structure, part of the 30S ribosomal subunit. Contacts proteins S9 and S11.

In terms of biological role, one of the primary rRNA binding proteins, it binds directly to 16S rRNA where it nucleates assembly of the head domain of the 30S subunit. Is located at the subunit interface close to the decoding center, probably blocks exit of the E-site tRNA. This chain is Small ribosomal subunit protein uS7, found in Pelagibacter ubique (strain HTCC1062).